Reading from the N-terminus, the 295-residue chain is Protease HtpX (295 aa).

The next 2 helical transmembrane spans lie at 4-24 and 42-62; these read ILLFLATNLAVVLIASITLSL and QLLVFCAVFGFAGSLFSLFIS. H147 serves as a coordination point for Zn(2+). The active site involves E148. Zn(2+) is bound at residue H151. A run of 2 helical transmembrane segments spans residues 158 to 178 and 199 to 219; these read VTLALVQGVVNTFVMFFARII and ITTIFAELVLGFLASAIVMWF. Residue E224 participates in Zn(2+) binding.

This sequence belongs to the peptidase M48B family. Requires Zn(2+) as cofactor.

Its subcellular location is the cell inner membrane. The sequence is that of Protease HtpX from Pseudomonas syringae pv. syringae (strain B728a).